A 172-amino-acid polypeptide reads, in one-letter code: Small ribosomal subunit protein uS5 (172 aa).

The S5 DRBM domain occupies 17-80 (LREKMISVNR…EQARRNMFKV (64 aa)).

The protein belongs to the universal ribosomal protein uS5 family. In terms of assembly, part of the 30S ribosomal subunit. Contacts proteins S4 and S8.

In terms of biological role, with S4 and S12 plays an important role in translational accuracy. Functionally, located at the back of the 30S subunit body where it stabilizes the conformation of the head with respect to the body. In Burkholderia lata (strain ATCC 17760 / DSM 23089 / LMG 22485 / NCIMB 9086 / R18194 / 383), this protein is Small ribosomal subunit protein uS5.